A 372-amino-acid chain; its full sequence is Aminomethyltransferase (372 aa).

It belongs to the GcvT family. As to quaternary structure, the glycine cleavage system is composed of four proteins: P, T, L and H.

It catalyses the reaction N(6)-[(R)-S(8)-aminomethyldihydrolipoyl]-L-lysyl-[protein] + (6S)-5,6,7,8-tetrahydrofolate = N(6)-[(R)-dihydrolipoyl]-L-lysyl-[protein] + (6R)-5,10-methylene-5,6,7,8-tetrahydrofolate + NH4(+). The glycine cleavage system catalyzes the degradation of glycine. The chain is Aminomethyltransferase from Burkholderia cenocepacia (strain ATCC BAA-245 / DSM 16553 / LMG 16656 / NCTC 13227 / J2315 / CF5610) (Burkholderia cepacia (strain J2315)).